The primary structure comprises 1303 residues: Ninein-like protein (1303 aa).

2 EF-hand domains span residues 8–43 (RYVAQLKDEFDSCDTTGTGYLDKEELTALCHKLSLD) and 61–77 (RVNFEEFKEGFVAVLSR). A disordered region spans residues 107–135 (TKRYGRRSRPDKTDLELTADSDSLPFGTD). 2 consecutive EF-hand domains span residues 203–238 (VTDGQVRAVWEELGVGAAGSLNREELSLVCDHIGLK) and 240–275 (LEAEELDALFRKLDKDQDGKVSLIEFQSGLFKPHDH). Residues Asp-253, Asp-255, Asp-257, Lys-259, and Glu-264 each coordinate Ca(2+). The stretch at 464 to 590 (EYESEVLLEQ…CSELELLKSQ (127 aa)) forms a coiled coil. Residues 592–617 (SGKRTRLSRSSLPANDWSNRRALTTE) show a composition bias toward polar residues. Residues 592–634 (SGKRTRLSRSSLPANDWSNRRALTTESDSDDPEMKKGTSPQVR) form a disordered region. Coiled coils occupy residues 660–791 (ELAM…LEAE), 821–876 (LAVL…LSAR), and 919–1146 (SKQL…VQAQ). The disordered stretch occupies residues 1156–1181 (EQMGSGTQEHASHLQTQLAEQQRRTQ). The span at 1159 to 1175 (GSGTQEHASHLQTQLAE) shows a compositional bias: polar residues. A coiled-coil region spans residues 1202 to 1278 (QEQYEKLMAS…EQRQKSAEKK (77 aa)).

It localises to the cytoplasm. It is found in the cytoskeleton. Its subcellular location is the microtubule organizing center. The protein localises to the centrosome. Required for the intracellular transport of organelles and vesicles, and is essential for the photoreceptor's outer segments formation, maintenance and function. The chain is Ninein-like protein (Ninl) from Danio rerio (Zebrafish).